The chain runs to 137 residues: MLSPRKVKFRKWQKGRLRGMATRGATVSFGDIGLKAVEHGKLSSQQIEAARIAMMRHIKRGGKVWIRIFPDHPVTAKPLETRQGSGKGAPVGWCAPVKPGRVLYEIKGVSLELAKEALTRAAHKLPIKTTIVVREGL.

The protein belongs to the universal ribosomal protein uL16 family. Part of the 50S ribosomal subunit.

Functionally, binds 23S rRNA and is also seen to make contacts with the A and possibly P site tRNAs. The chain is Large ribosomal subunit protein uL16 from Nitratidesulfovibrio vulgaris (strain DSM 19637 / Miyazaki F) (Desulfovibrio vulgaris).